Reading from the N-terminus, the 104-residue chain is Replication restart protein PriB (104 aa).

The SSB domain occupies 1 to 101 (MTNRLTLSGT…LHAEQIELID (101 aa)).

It belongs to the PriB family. Homodimer. Interacts with PriA and DnaT. Component of the replication restart primosome. Primosome assembly occurs via a 'hand-off' mechanism. PriA binds to replication forks, subsequently PriB then DnaT bind; DnaT then displaces ssDNA to generate the helicase loading substrate.

Functionally, involved in the restart of stalled replication forks, which reloads the replicative helicase on sites other than the origin of replication; the PriA-PriB pathway is the major replication restart pathway. During primosome assembly it facilitates complex formation between PriA and DnaT on DNA; stabilizes PriA on DNA. Stimulates the DNA unwinding activity of PriA helicase. The protein is Replication restart protein PriB of Salmonella typhi.